Reading from the N-terminus, the 234-residue chain is DEAD-box ATP-dependent RNA helicase 3 (234 aa).

Positions 120–148 (LAVSRLGLPQKLVETLEKRGITKLFPIQR) match the Q motif motif. One can recognise a Helicase ATP-binding domain in the interval 151 to 234 (LVPALEGRDI…RTVCVYGGVS (84 aa)). 164–171 (AKTGTGKT) lines the ATP pocket.

Belongs to the DEAD box helicase family. DDX21/DDX50 subfamily.

The polypeptide is DEAD-box ATP-dependent RNA helicase 3 (Helianthus annuus (Common sunflower)).